We begin with the raw amino-acid sequence, 660 residues long: Bifunctional polymyxin resistance protein ArnA (660 aa).

The interval 1–304 (MKAIVFAYHD…DMSMVTDVRV (304 aa)) is formyltransferase ArnAFT. The active-site Proton donor; for formyltransferase activity is His-104. (6R)-10-formyltetrahydrofolate-binding positions include Arg-114 and 136–140 (VLKPD). The segment at 314–660 (HRKRVLILGV…RGAVEELGKN (347 aa)) is dehydrogenase ArnADH. NAD(+) contacts are provided by residues Asp-347 and 368–369 (DI). Residues Ala-393, Tyr-398, and 432–433 (TS) each bind UDP-alpha-D-glucuronate. Catalysis depends on Glu-434, which acts as the Proton acceptor; for decarboxylase activity. UDP-alpha-D-glucuronate-binding positions include Arg-460, Asn-492, 526–535 (KLVDGGEQKR), and Tyr-613. The active-site Proton donor; for decarboxylase activity is Arg-619.

This sequence in the N-terminal section; belongs to the Fmt family. UDP-L-Ara4N formyltransferase subfamily. In the C-terminal section; belongs to the NAD(P)-dependent epimerase/dehydratase family. UDP-glucuronic acid decarboxylase subfamily. Homohexamer, formed by a dimer of trimers.

The catalysed reaction is UDP-alpha-D-glucuronate + NAD(+) = UDP-beta-L-threo-pentopyranos-4-ulose + CO2 + NADH. It carries out the reaction UDP-4-amino-4-deoxy-beta-L-arabinose + (6R)-10-formyltetrahydrofolate = UDP-4-deoxy-4-formamido-beta-L-arabinose + (6S)-5,6,7,8-tetrahydrofolate + H(+). The protein operates within nucleotide-sugar biosynthesis; UDP-4-deoxy-4-formamido-beta-L-arabinose biosynthesis; UDP-4-deoxy-4-formamido-beta-L-arabinose from UDP-alpha-D-glucuronate: step 1/3. It participates in nucleotide-sugar biosynthesis; UDP-4-deoxy-4-formamido-beta-L-arabinose biosynthesis; UDP-4-deoxy-4-formamido-beta-L-arabinose from UDP-alpha-D-glucuronate: step 3/3. It functions in the pathway bacterial outer membrane biogenesis; lipopolysaccharide biosynthesis. In terms of biological role, bifunctional enzyme that catalyzes the oxidative decarboxylation of UDP-glucuronic acid (UDP-GlcUA) to UDP-4-keto-arabinose (UDP-Ara4O) and the addition of a formyl group to UDP-4-amino-4-deoxy-L-arabinose (UDP-L-Ara4N) to form UDP-L-4-formamido-arabinose (UDP-L-Ara4FN). The modified arabinose is attached to lipid A and is required for resistance to polymyxin and cationic antimicrobial peptides. This is Bifunctional polymyxin resistance protein ArnA from Photorhabdus laumondii subsp. laumondii (strain DSM 15139 / CIP 105565 / TT01) (Photorhabdus luminescens subsp. laumondii).